The primary structure comprises 302 residues: tRNA dimethylallyltransferase (302 aa).

Residue 10-17 coordinates ATP; that stretch reads GPTAIGKT. Substrate is bound at residue 12–17; that stretch reads TAIGKT. An interaction with substrate tRNA region spans residues 35–38; sequence DSRQ.

It belongs to the IPP transferase family. As to quaternary structure, monomer. It depends on Mg(2+) as a cofactor.

The enzyme catalyses adenosine(37) in tRNA + dimethylallyl diphosphate = N(6)-dimethylallyladenosine(37) in tRNA + diphosphate. Catalyzes the transfer of a dimethylallyl group onto the adenine at position 37 in tRNAs that read codons beginning with uridine, leading to the formation of N6-(dimethylallyl)adenosine (i(6)A). This chain is tRNA dimethylallyltransferase, found in Christiangramia forsetii (strain DSM 17595 / CGMCC 1.15422 / KT0803) (Gramella forsetii).